Here is an 874-residue protein sequence, read N- to C-terminus: Alanine--tRNA ligase (874 aa).

The Zn(2+) site is built by His-563, His-567, Cys-664, and His-668.

This sequence belongs to the class-II aminoacyl-tRNA synthetase family. Zn(2+) is required as a cofactor.

It localises to the cytoplasm. The catalysed reaction is tRNA(Ala) + L-alanine + ATP = L-alanyl-tRNA(Ala) + AMP + diphosphate. Functionally, catalyzes the attachment of alanine to tRNA(Ala) in a two-step reaction: alanine is first activated by ATP to form Ala-AMP and then transferred to the acceptor end of tRNA(Ala). Also edits incorrectly charged Ser-tRNA(Ala) and Gly-tRNA(Ala) via its editing domain. This is Alanine--tRNA ligase from Methylobacillus flagellatus (strain ATCC 51484 / DSM 6875 / VKM B-1610 / KT).